Here is a 345-residue protein sequence, read N- to C-terminus: tRNA pseudouridine synthase B (345 aa).

The disordered stretch occupies residues 1–33; that stretch reads MGGNSQPHQEPRRVNNDPRAKQQKGNQVRRDRR. Positions 9–20 are enriched in basic and acidic residues; that stretch reads QEPRRVNNDPRA. D72 serves as the catalytic Nucleophile.

The protein belongs to the pseudouridine synthase TruB family. Type 1 subfamily.

The catalysed reaction is uridine(55) in tRNA = pseudouridine(55) in tRNA. Functionally, responsible for synthesis of pseudouridine from uracil-55 in the psi GC loop of transfer RNAs. This is tRNA pseudouridine synthase B from Bradyrhizobium diazoefficiens (strain JCM 10833 / BCRC 13528 / IAM 13628 / NBRC 14792 / USDA 110).